We begin with the raw amino-acid sequence, 1692 residues long: Flagellar attachment zone protein 1 (1692 aa).

3 coiled-coil regions span residues 613–657 (REQE…KLQK), 684–864 (VTLD…HKVR), and 903–1607 (NDHM…SALE). Tandem repeats lie at residues 1012-1025 (EELELKAAENEKLA), 1026-1039 (EELELKAAENEKLA), 1040-1053 (EELELKVAENEKLA), 1054-1067 (EELELKVAENEKLA), 1068-1081 (EELELKAAENEKLA), 1082-1095 (EELELKAAENEKLA), 1096-1109 (EELELKAAENEKLA), 1110-1123 (EELELKAAENEKLA), 1124-1137 (EELELKAAENEKLA), 1138-1151 (EELELKAAENEKLA), 1152-1165 (EELELKAAENEKLA), 1166-1179 (EELELKVAENEKLA), 1180-1193 (EELELKAAENEKLA), 1194-1207 (EELELKVAENEKLA), 1208-1221 (EELELKAAENEKLA), 1222-1235 (EELELKAAENEKLA), 1236-1249 (EELELKAAENEKLA), 1250-1263 (EELELKAAENEKLA), 1264-1277 (EELELKVAENEKLA), 1278-1291 (EELELKAAENEKLA), 1292-1305 (EELELKVAENEKLA), 1306-1319 (EELELKAAENEKLA), 1320-1333 (EELELKVAENEKLA), 1334-1347 (EELELKAAENEKLA), 1348-1361 (EELELKVAENEKLA), 1362-1375 (EELELKAAENEKLA), 1376-1389 (EELELKAAENEKLA), 1390-1403 (EELELKAAENEKLA), 1404-1417 (EELELKAAENEKLA), 1418-1431 (EELELKAAENEKLA), 1432-1445 (EELELKVAENEKLA), 1446-1459 (EELELKAAENEKLA), 1460-1473 (EELELKVAENEKLA), 1474-1487 (EELELKAAENEKLA), 1488-1501 (EELELKAAENEKLA), 1502-1515 (EELELKAAENEKLA), and 1516-1529 (EELELKVAENKRLA). A 37 X 14 AA tandem repeats of E-E-L-E-L-K-[VA]-A-E-N-E-K-L-A region spans residues 1012–1529 (EELELKAAEN…LKVAENKRLA (518 aa)).

Its subcellular location is the cell projection. The protein resides in the cilium. The protein localises to the flagellum. Its function is as follows. A component of FAZ filament that is required for correct FAZ assembly and attachment. Not essential for new flagellum growth. This Trypanosoma brucei brucei (strain 927/4 GUTat10.1) protein is Flagellar attachment zone protein 1.